The primary structure comprises 180 residues: MITAEAASESTVPAVPGDTAATGVPEHEELVWPWKDAPIRELVQRIHQLQAERAQAFRRLEEGHRQYLSSGPPYDFPRYRSTVHEVTQVFAAASREVLAVEAELAGPRAQPLLASHVRSLQQLEETRLTTVALLQLMGTPELTGQEDSLQMHQLKMKVIKTMEAISEVLQDLRFDAESAE.

The tract at residues 1–23 is disordered; that stretch reads MITAEAASESTVPAVPGDTAATG.

The protein is Required for excision 1-B domain-containing protein of Bos taurus (Bovine).